The following is a 542-amino-acid chain: MNSNRSLLVMGLLLVSFLIFTQWQQDFNPEIQAQKQAQQQAQVASQSGDVPAASNANTVIAENATQGKTVTLESDVLRLTIDTLGGDVIASDLLAHNAELNSQTPFKLLQTGATTYVAQSGLVGKNGIDTNAGRPQYQVAQDTFVLAEGQNEMSVPMTFEKDGVLYTKTFVLKRGSYDVAVNFNVKNQTAATVEVQPYGQIKYTLLESSGSLTMPTYTGGAYSSAETNYKKYSFQDMEKANLDINTKAGWVALLQHYFVSAWVPNQDAENTIYSRTNNGIATIGYRGPVTTIAPNSEATITSQLWTGPKDQKEMEATAANLDLTVDYGWAWFIAKPLFALLTFIQSIVTNWGLAIIGVTIVVKTILYPLTKAQYTSMARMRMLQPKIQEMRERFGDDRQRMSQEMMKLYKEEKVNPMGGCLPILIQMPIFIALYWTFMEAVELRHAPFFGWIQDLSAQDPYYILPLLMGASMFLLQKMSPSPVTDPVQQKVMTFMPVMFTVFFLWFPSGLVLYWLTSNIITIVQQWLIYRNLEKKGLHSRKK.

The next 5 membrane-spanning stretches (helical) occupy residues 7 to 27 (LLVM…QQDF), 338 to 358 (FALL…IIGV), 417 to 437 (MGGC…YWTF), 455 to 475 (LSAQ…MFLL), and 494 to 514 (FMPV…VLYW).

This sequence belongs to the OXA1/ALB3/YidC family. Type 1 subfamily. In terms of assembly, interacts with the Sec translocase complex via SecD. Specifically interacts with transmembrane segments of nascent integral membrane proteins during membrane integration.

The protein resides in the cell inner membrane. Its function is as follows. Required for the insertion and/or proper folding and/or complex formation of integral membrane proteins into the membrane. Involved in integration of membrane proteins that insert both dependently and independently of the Sec translocase complex, as well as at least some lipoproteins. Aids folding of multispanning membrane proteins. This is Membrane protein insertase YidC from Actinobacillus pleuropneumoniae serotype 3 (strain JL03).